The chain runs to 244 residues: Small ribosomal subunit protein uS2 (244 aa).

Belongs to the universal ribosomal protein uS2 family.

This is Small ribosomal subunit protein uS2 from Buchnera aphidicola subsp. Schizaphis graminum (strain Sg).